The chain runs to 610 residues: UvrABC system protein C (610 aa).

The GIY-YIG domain occupies 16-94; it reads SQPGVYRMYD…IKLYQPRYNV (79 aa). The UVR domain maps to 204-239; it reads DQVLTQLISRMETASQNLEFEEAARIRDQIQAVRRV.

This sequence belongs to the UvrC family. Interacts with UvrB in an incision complex.

The protein localises to the cytoplasm. In terms of biological role, the UvrABC repair system catalyzes the recognition and processing of DNA lesions. UvrC both incises the 5' and 3' sides of the lesion. The N-terminal half is responsible for the 3' incision and the C-terminal half is responsible for the 5' incision. This chain is UvrABC system protein C, found in Escherichia coli (strain SMS-3-5 / SECEC).